A 1035-amino-acid chain; its full sequence is Unconventional myosin IC (1035 aa).

The Myosin motor domain maps to 21-703; sequence GVQDFVLLEN…TLFDTEDAYQ (683 aa). Residue 114-121 coordinates ATP; the sequence is GESGSGKT. Serine 304 carries the phosphoserine modification. Residue threonine 310 is modified to Phosphothreonine. The tract at residues 578–600 is actin-binding; the sequence is LNNLMDILMCKEPSYIRCIKPND. 3 IQ domains span residues 696-728, 729-751, and 752-779; these read FDTE…KYLK, LRAQ…AAKK, and RREA…FNEE. A TH1 domain is found at 857 to 1035; that stretch reads KNNYASSVST…KGHLVIIGTQ (179 aa).

Belongs to the TRAFAC class myosin-kinesin ATPase superfamily. Myosin family. As to quaternary structure, binds F-actin. In terms of tissue distribution, in the embryo, expressed in gastric caeca, midgut cells of the proventriculus, and in the mid and hindgut. In the larval and adult gut brush border, expressed in the microvilli. Also expressed at high levels in follicle cells during oogenesis.

Its subcellular location is the cytoplasm. It is found in the cell cortex. It localises to the cell membrane. In terms of biological role, unconventional myosin that functions as actin-based motor protein with ATPase activity. Binds to membranes enriched in phosphatidylinositol 4-5-bisphosphate, and can glide along actin filaments when anchored to a lipid bilayer. Functions as antagonist for Myo31DF, an unconventional myosin with an essential role in the establishment of body left-right asymmetry. This is Unconventional myosin IC (Myo61F) from Drosophila melanogaster (Fruit fly).